Consider the following 1316-residue polypeptide: DNA-directed RNA polymerase subunit beta' (1316 aa).

Cys60, Cys62, Cys75, and Cys78 together coordinate Zn(2+). Mg(2+) is bound by residues Asp535, Asp537, and Asp539. Positions 891, 968, 975, and 978 each coordinate Zn(2+).

The protein belongs to the RNA polymerase beta' chain family. As to quaternary structure, the RNAP catalytic core consists of 2 alpha, 1 beta, 1 beta' and 1 omega subunit. When a sigma factor is associated with the core the holoenzyme is formed, which can initiate transcription. Mg(2+) serves as cofactor. The cofactor is Zn(2+).

It carries out the reaction RNA(n) + a ribonucleoside 5'-triphosphate = RNA(n+1) + diphosphate. DNA-dependent RNA polymerase catalyzes the transcription of DNA into RNA using the four ribonucleoside triphosphates as substrates. In Mycobacterium ulcerans (strain Agy99), this protein is DNA-directed RNA polymerase subunit beta'.